The following is an 844-amino-acid chain: Beta-mannosidase B (844 aa).

The active-site Proton donor is the E432.

Belongs to the glycosyl hydrolase 2 family. Beta-mannosidase B subfamily.

It catalyses the reaction Hydrolysis of terminal, non-reducing beta-D-mannose residues in beta-D-mannosides.. It participates in glycan metabolism; N-glycan degradation. In terms of biological role, exoglycosidase that cleaves the single beta-linked mannose residue from the non-reducing end of beta-mannosidic oligosaccharides of various complexity and length. Prefers mannobiose over mannotriose and has no activity against polymeric mannan. Is also severely restricted by galactosyl substitutions at the +1 subsite. The sequence is that of Beta-mannosidase B (mndB) from Aspergillus oryzae (strain ATCC 42149 / RIB 40) (Yellow koji mold).